A 359-amino-acid chain; its full sequence is Type-1 angiotensin II receptor (359 aa).

Residues 1–25 (MILNSSTEDGIKRIQDDCPKAGRHN) are Extracellular-facing. Asn4 carries N-linked (GlcNAc...) asparagine glycosylation. Positions 15 and 17 each coordinate angiotensin II. 2 disulfide bridges follow: Cys18-Cys274 and Cys101-Cys180. The chain crosses the membrane as a helical span at residues 26–55 (YIFIMIPTLYSIIFVVGIFGNSLVVIVIYF). Topologically, residues 56-61 (YMKLKT) are cytoplasmic. A helical membrane pass occupies residues 62 to 89 (VASVFLLNLALADLCFLLTLPLWAVYTA). Residues 90–98 (MEYRWPFGN) are Extracellular-facing. Residues 99-125 (YLCKIASASVSFNLYASVFLLTCLSID) traverse the membrane as a helical segment. Topologically, residues 126-141 (RYLAIVHPMKSRLRRT) are cytoplasmic. Residues 142-165 (MLVAKVTCIIIWLLAGLASLPTII) form a helical membrane-spanning segment. At 166 to 190 (HRNVFFIENTNITVCAFHYESQNST) the chain is on the extracellular side. Residue Arg167 coordinates angiotensin II. N-linked (GlcNAc...) asparagine glycosylation occurs at Asn176. Residues Phe182, His183, and Tyr184 each contribute to the angiotensin II site. A glycan (N-linked (GlcNAc...) asparagine) is linked at Asn188. A helical membrane pass occupies residues 191–216 (LPVGLGLTKNILGFLFPFLIILTSYT). Lys199 serves as a coordination point for angiotensin II. Residues 217 to 239 (LIWKTLKKAYEIQKNKPRKDDIF) lie on the Cytoplasmic side of the membrane. Residues 240-268 (KIILAIVLFFFFSWVPHQIFTFMDVLIQL) form a helical membrane-spanning segment. Topologically, residues 269 to 278 (GLIRDCKIED) are extracellular. The helical transmembrane segment at 279–304 (IVDTAMPITICLAYFNNCLNPLFYGF) threads the bilayer. Residues 305–359 (LGKKFKKYFLQLLKYIPPKAKSHSNLSTKMSTLSYRPSENGNSSTKKPAPCIEVE) are Cytoplasmic-facing. Residues 336–350 (TLSYRPSENGNSSTK) are compositionally biased toward polar residues. Residues 336–359 (TLSYRPSENGNSSTKKPAPCIEVE) are disordered. Cys355 is lipidated: S-palmitoyl cysteine.

The protein belongs to the G-protein coupled receptor 1 family. As to quaternary structure, interacts with MAS1. Interacts with ARRB1. Interacts with FLNA (via filamin repeat 21); increases PKA-mediated phosphorylation of FLNA. Post-translationally, C-terminal Ser or Thr residues may be phosphorylated. In terms of tissue distribution, adrenal medulla, cortex and kidney.

The protein localises to the cell membrane. Functionally, receptor for angiotensin II, a vasoconstricting peptide, which acts as a key regulator of blood pressure and sodium retention by the kidney. The activated receptor in turn couples to G-alpha proteins G(q) (GNAQ, GNA11, GNA14 or GNA15) and thus activates phospholipase C and increases the cytosolic Ca(2+) concentrations, which in turn triggers cellular responses such as stimulation of protein kinase C. This chain is Type-1 angiotensin II receptor (AGTR1), found in Bos taurus (Bovine).